Here is a 215-residue protein sequence, read N- to C-terminus: Disulfide-bond oxidoreductase YfcG (215 aa).

Residues methionine 1 to leucine 87 enclose the GST N-terminal domain. Glutathione is bound by residues asparagine 11, glutamine 38, arginine 40, isoleucine 52, glutamate 71–serine 72, and arginine 132. The region spanning glutamate 90 to serine 215 is the GST C-terminal domain.

This sequence belongs to the GST superfamily. Nu-class GSH transferase family. In terms of assembly, homodimer.

Exhibits a very robust glutathione (GSH)-dependent disulfide-bond reductase activity toward the model substrate, 2-hydroxyethyl disulfide; the actual physiological substrates are not known. Also has a low GSH-dependent hydroperoxidase activity toward cumene hydroperoxide, but does not reduce H(2)O(2), tert-butyl hydroperoxide, benzyl peroxide, or lauroyl peroxide. Exhibits little or no GSH transferase activity with most typical electrophilic substrates, and has no detectable transferase activity using glutathionylspermidine (GspSH) as the nucleophilic substrate. Is involved in defense against oxidative stress, probably via its peroxidase activity. In Escherichia coli (strain K12), this protein is Disulfide-bond oxidoreductase YfcG (yfcG).